Consider the following 761-residue polypeptide: Prolyl oligopeptidase A (761 aa).

Catalysis depends on charge relay system residues Ser-606, Asp-690, and His-726.

Belongs to the peptidase S9A family. Monomer.

The catalysed reaction is Hydrolysis of Pro-|-Xaa &gt;&gt; Ala-|-Xaa in oligopeptides.. Housekeeping prolyl oligopeptidase (POP) that behaves like a conventional POP by cleaving peptide bonds on the C-terminal side of prolyl residues within peptides that are up to approximately 30 amino acids long. The sequence is that of Prolyl oligopeptidase A from Amanita bisporigera (Destroying angel).